Reading from the N-terminus, the 836-residue chain is Subtilisin-like protease PIMMS2 (836 aa).

Catalysis depends on charge relay system residues D155, H222, and S414. The segment at 802–836 (EKKNKYNNSVLKRNEMKSHNNSQKTPKIIPRKYSR) is disordered.

This sequence belongs to the peptidase S8 family.

The protein localises to the cell membrane. The enzyme catalyses Hydrolysis of proteins with broad specificity for peptide bonds, and a preference for a large uncharged residue in P1. Hydrolyzes peptide amides.. Its function is as follows. Probable serine protease which plays a role in ookinete traversal of the mosquito host midgut epithelium. This Plasmodium berghei (strain Anka) protein is Subtilisin-like protease PIMMS2.